Reading from the N-terminus, the 307-residue chain is Aspartate carbamoyltransferase catalytic subunit (307 aa).

Residues Arg-54 and Thr-55 each coordinate carbamoyl phosphate. Lys-83 contributes to the L-aspartate binding site. 3 residues coordinate carbamoyl phosphate: Arg-104, His-132, and Gln-135. L-aspartate contacts are provided by Arg-165 and Arg-228. Residues Leu-267 and Pro-268 each contribute to the carbamoyl phosphate site.

It belongs to the aspartate/ornithine carbamoyltransferase superfamily. ATCase family. Heterododecamer (2C3:3R2) of six catalytic PyrB chains organized as two trimers (C3), and six regulatory PyrI chains organized as three dimers (R2).

The catalysed reaction is carbamoyl phosphate + L-aspartate = N-carbamoyl-L-aspartate + phosphate + H(+). It participates in pyrimidine metabolism; UMP biosynthesis via de novo pathway; (S)-dihydroorotate from bicarbonate: step 2/3. Its function is as follows. Catalyzes the condensation of carbamoyl phosphate and aspartate to form carbamoyl aspartate and inorganic phosphate, the committed step in the de novo pyrimidine nucleotide biosynthesis pathway. In Clostridium botulinum (strain Loch Maree / Type A3), this protein is Aspartate carbamoyltransferase catalytic subunit.